We begin with the raw amino-acid sequence, 167 residues long: Lipoprotein signal peptidase (167 aa).

3 helical membrane passes run 10 to 30 (LIWL…KAWV), 68 to 88 (WQMW…TFWL), and 98 to 118 (SALP…DRFL). Active-site residues include Asp-124 and Asp-142. A helical transmembrane segment spans residues 138-158 (FNLADSAIVAGAIGIGLLSLF).

It belongs to the peptidase A8 family.

The protein resides in the cell inner membrane. The enzyme catalyses Release of signal peptides from bacterial membrane prolipoproteins. Hydrolyzes -Xaa-Yaa-Zaa-|-(S,diacylglyceryl)Cys-, in which Xaa is hydrophobic (preferably Leu), and Yaa (Ala or Ser) and Zaa (Gly or Ala) have small, neutral side chains.. The protein operates within protein modification; lipoprotein biosynthesis (signal peptide cleavage). Its function is as follows. This protein specifically catalyzes the removal of signal peptides from prolipoproteins. This chain is Lipoprotein signal peptidase, found in Xylella fastidiosa (strain 9a5c).